We begin with the raw amino-acid sequence, 1227 residues long: RNA-binding protein 20 (1227 aa).

Disordered stretches follow at residues 1–58 and 289–374; these read MVLA…QAGL and GSHV…SKQG. Positions 27–42 are enriched in low complexity; the sequence is PGARASPAPSGPRGMQ. Over residues 43–56 the composition is skewed to pro residues; that stretch reads QPPPPPQPPPPPQA. Residues 313–331 are compositionally biased toward polar residues; it reads QGTNSQWESPHGFSGQSKP. The U1-type zinc-finger motif lies at 409–443; it reads HLPHICSICDKKVFDLKDWELHVKGKLHAQKCLVF. A Phosphoserine modification is found at serine 498. Residues 518–593 form the RRM domain; that stretch reads RVVHICNLPE…EKLLIRMSKR (76 aa). Residues 624-634 are compositionally biased toward basic and acidic residues; it reads EADRYGPERPR. 2 disordered regions span residues 624 to 906 and 977 to 1089; these read EADR…TNME and SLKS…ASPP. Residues 628–655 are RS; that stretch reads YGPERPRSRSPVSRSLSPRSHTPSFTSC. Phosphoserine is present on residues serine 635, serine 637, serine 640, serine 642, serine 660, and serine 679. Over residues 636–660 the composition is skewed to low complexity; sequence RSPVSRSLSPRSHTPSFTSCSSSHS. Basic and acidic residues-rich tracts occupy residues 674–709 and 716–738; these read DSWE…PWAH and RQLD…EKYP. The span at 741 to 752 shows a compositional bias: polar residues; sequence GSPNLPHSVSSY. At serine 742 the chain carries Phosphoserine. Basic and acidic residues-rich tracts occupy residues 753–772, 784–807, and 816–856; these read KSRE…DKYL, RKDE…EDGL, and EGAK…KEEQ. A Phosphoserine modification is found at serine 801. 7 positions are modified to phosphoserine: serine 865, serine 876, serine 891, serine 893, serine 977, serine 980, and serine 1013. Positions 868–888 are enriched in basic and acidic residues; sequence RQEKEAEFSDPENTRTKKEQD. Residues 1024-1036 show a composition bias toward basic and acidic residues; that stretch reads CYEKEAKGVESSD. Phosphoserine occurs at positions 1048, 1060, 1080, 1115, and 1120. The segment at 1161–1192 adopts a Matrin-type zinc-finger fold; the sequence is FYCKLCGLFYTSEETAKMSHCRSAVHYRNLQK. Residues 1201–1215 show a composition bias toward basic and acidic residues; sequence GLKETEGADSPRPED. Residues 1201 to 1227 form a disordered region; it reads GLKETEGADSPRPEDSGIVPRFERKKL. Serine 1210 is modified (phosphoserine).

As to quaternary structure, associates with components of the U1 and U2 U1 small nuclear ribonucleoprotein complexes. Post-translationally, phosphorylation regulates the subcellular localization. Phosphorylation of Ser-635 and Ser-637 in the RS (arginine/serine-rich) region promotes nuclear localization of the protein. In contrast, phosphorylation of the C-terminal disordered region promotes localization to cytoplasmic ribonucleoprotein granules. As to expression, mainly expressed in the heart. Also expressed in skeletal muscle tissues, ovary, small intestine and colon.

It localises to the nucleus. The protein resides in the cytoplasm. It is found in the cytoplasmic ribonucleoprotein granule. RNA-binding protein that acts as a regulator of mRNA splicing of a subset of genes encoding key structural proteins involved in cardiac development, such as TTN (Titin), CACNA1C, CAMK2D or PDLIM5/ENH. Acts as a repressor of mRNA splicing: specifically binds the 5'UCUU-3' motif that is predominantly found within intronic sequences of pre-mRNAs, leading to the exclusion of specific exons in target transcripts. RBM20-mediated exon skipping is hormone-dependent and is essential for TTN isoform transition in both cardiac and skeletal muscles. RBM20-mediated exon skipping of TTN provides substrates for the formation of circular RNA (circRNAs) from the TTN transcripts. Together with RBM24, promotes the expression of short isoforms of PDLIM5/ENH in cardiomyocytes. This Homo sapiens (Human) protein is RNA-binding protein 20.